The chain runs to 362 residues: Cytoskeleton protein RodZ (362 aa).

The Cytoplasmic portion of the chain corresponds to 1–111 (MNTEASQDQT…LGKKHKKRDG (111 aa)). In terms of domain architecture, HTH cro/C1-type spans 19–79 (LRQARESLGL…KLVHLPEDEL (61 aa)). The H-T-H motif DNA-binding region spans 30 to 49 (QQTVAERLCLKVSTIRDIEE). A helical; Signal-anchor for type II membrane protein membrane pass occupies residues 112-132 (WLMSFTWLIVLVVLGLTGAWW). Over 133–362 (WQNHQAQQAE…RVARLTVGVE (230 aa)) the chain is Periplasmic. Residues 151–277 (SAQLSQNGGQ…LPTADAGVSG (127 aa)) are disordered. Over residues 193 to 221 (STSAVTNSATTSSATTSSVPTTSSVPKTT) the composition is skewed to low complexity. A compositionally biased stretch (polar residues) spans 223–242 (VPKTNSTEPVDTANTNTTMH). Residues 246 to 259 (AASAAVSPSQVPQP) are compositionally biased toward low complexity.

Belongs to the RodZ family.

Its subcellular location is the cell inner membrane. In terms of biological role, cytoskeletal protein that is involved in cell-shape control through regulation of the length of the long axis. The chain is Cytoskeleton protein RodZ from Yersinia pseudotuberculosis serotype IB (strain PB1/+).